The chain runs to 255 residues: 5'-nucleotidase SurE (255 aa).

A divalent metal cation is bound by residues D8, D9, S39, and N91.

It belongs to the SurE nucleotidase family. A divalent metal cation serves as cofactor.

The protein resides in the cytoplasm. The enzyme catalyses a ribonucleoside 5'-phosphate + H2O = a ribonucleoside + phosphate. Nucleotidase that shows phosphatase activity on nucleoside 5'-monophosphates. This is 5'-nucleotidase SurE from Acinetobacter baumannii (strain SDF).